The chain runs to 197 residues: Imidazoleglycerol-phosphate dehydratase (197 aa).

Belongs to the imidazoleglycerol-phosphate dehydratase family.

It is found in the cytoplasm. It carries out the reaction D-erythro-1-(imidazol-4-yl)glycerol 3-phosphate = 3-(imidazol-4-yl)-2-oxopropyl phosphate + H2O. It participates in amino-acid biosynthesis; L-histidine biosynthesis; L-histidine from 5-phospho-alpha-D-ribose 1-diphosphate: step 6/9. The protein is Imidazoleglycerol-phosphate dehydratase of Pseudomonas putida (strain ATCC 700007 / DSM 6899 / JCM 31910 / BCRC 17059 / LMG 24140 / F1).